The chain runs to 255 residues: Cathepsin G (255 aa).

Positions methionine 1–alanine 18 are cleaved as a signal peptide. A propeptide spans glycine 19–glutamate 20 (activation peptide). The tract at residues isoleucine 21–arginine 25 is important for antimicrobial activity. Residues isoleucine 21–arginine 243 form the Peptidase S1 domain. Cysteine 49 and cysteine 65 are disulfide-bonded. Residue histidine 64 is the Charge relay system of the active site. Asparagine 71 is a glycosylation site (N-linked (GlcNAc...) (complex) asparagine; alternate). An N-linked (GlcNAc...) (paucimannose) asparagine; alternate glycan is attached at asparagine 71. Positions histidine 97–leucine 111 are important for antimicrobial activity. The active-site Charge relay system is the aspartate 108. 2 disulfides stabilise this stretch: cysteine 142/cysteine 207 and cysteine 172/cysteine 186. The active-site Charge relay system is the serine 201. A propeptide spanning residues phenylalanine 245–leucine 255 is cleaved from the precursor.

It belongs to the peptidase S1 family. As to quaternary structure, (Microbial infection) Interacts with CASP4; the interaction is promoted by the Td92 surface protein of the periodontal pathogen T.denticola and leads to CASP4 activation. (Microbial infection) Interacts with M.tuberculosis protein Rv3364c. In terms of assembly, (Microbial infection) Interacts with S.aureus EapH1; EapH1 acts as a reversible inhibitor of CATG activity. Two C-terminal truncation variants have been identified, one which ends at Arg-243 and one which ends at Ser-244. In terms of tissue distribution, expressed in neutrophils (at protein level). Expressed in B cells.

Its subcellular location is the cell membrane. It localises to the cytoplasmic granule. It is found in the secreted. The protein resides in the cytoplasm. The protein localises to the cytosol. Its subcellular location is the lysosome. It localises to the nucleus. The catalysed reaction is Specificity similar to chymotrypsin C.. Its activity is regulated as follows. Inhibited by soybean trypsin inhibitor, benzamidine, the synthetic peptide R13K, Z-Gly-Leu-Phe-CH2Cl, phenylmethylsulfonyl fluoride, 3,4-dichloroisocoumarin, DFP, SBTI and alpha-1-antitrypsin. Inhibited by LPS from P.aeruginosa but not by LPS from S.minnesota. Not inhibited by elastinal, CMK, TLCK, ETDA or leupeptin. (Microbial infection) Inhibited reversibly by S.aureus EapH1. With respect to regulation, (Microbial infection) Activity is induced by the Td92 surface protein of the periodontal pathogen T.denticola. Serine protease with trypsin- and chymotrypsin-like specificity. Also displays antibacterial activity against Gram-negative and Gram-positive bacteria independent of its protease activity. Prefers Phe and Tyr residues in the P1 position of substrates but also cleaves efficiently after Trp and Leu. Shows a preference for negatively charged amino acids in the P2' position and for aliphatic amino acids both upstream and downstream of the cleavage site. Required for recruitment and activation of platelets which is mediated by the F2RL3/PAR4 platelet receptor. Binds reversibly to and stimulates B cells and CD4(+) and CD8(+) T cells. Also binds reversibly to natural killer (NK) cells and enhances NK cell cytotoxicity through its protease activity. Cleaves complement C3. Cleaves vimentin. Cleaves thrombin receptor F2R/PAR1 and acts as either an agonist or an inhibitor, depending on the F2R cleavage site. Cleavage of F2R at '41-Arg-|-Ser-42' results in receptor activation while cleavage at '55-Phe-|-Trp-56' results in inhibition of receptor activation. Cleaves the synovial mucin-type protein PRG4/lubricin. Cleaves and activates IL36G which promotes expression of chemokines CXCL1 and CXLC8 in keratinocytes. Cleaves IL33 into mature forms which have greater activity than the unprocessed form. Cleaves coagulation factor F8 to produce a partially activated form. Also cleaves and activates coagulation factor F10. Cleaves leukocyte cell surface protein SPN/CD43 to release its extracellular domain and trigger its intramembrane proteolysis by gamma-secretase, releasing the CD43 cytoplasmic tail chain (CD43-ct) which translocates to the nucleus. Cleaves CCL5/RANTES to produce RANTES(4-68) lacking the N-terminal three amino acids which exhibits reduced chemotactic and antiviral activities. During apoptosis, cleaves SMARCA2/BRM to produce a 160 kDa cleavage product which localizes to the cytosol. Cleaves myelin basic protein MBP in B cell lysosomes at '224-Phe-|-Lys-225' and '248-Phe-|-Ser-249', degrading the major immunogenic MBP epitope and preventing the activation of MBP-specific autoreactive T cells. Cleaves annexin ANXA1 and antimicrobial peptide CAMP to produce peptides which act on neutrophil N-formyl peptide receptors to enhance the release of CXCL2. Acts as a ligand for the N-formyl peptide receptor FPR1, enhancing phagocyte chemotaxis. Has antibacterial activity against the Gram-negative bacteria N.gonorrhoeae and P.aeruginosa. Likely to act against N.gonorrhoeae by interacting with N.gonorrhoeae penA/PBP2. Exhibits potent antimicrobial activity against the Gram-positive bacterium L.monocytogenes. Has antibacterial activity against the Gram-positive bacterium S.aureus and degrades S.aureus biofilms, allowing polymorphonuclear leukocytes to penetrate the biofilm and phagocytose bacteria. Has antibacterial activity against M.tuberculosis. Mediates CASP4 activation induced by the Td92 surface protein of the periodontal pathogen T.denticola, causing production and secretion of IL1A and leading to pyroptosis of gingival fibroblasts. Induces platelet aggregation which is strongly potentiated in the presence of ELANE. This Homo sapiens (Human) protein is Cathepsin G (CTSG).